The chain runs to 89 residues: Acylphosphatase (89 aa).

One can recognise an Acylphosphatase-like domain in the interval 4–89 (SYIAHISGRV…WQEHHFFSIG (86 aa)). Active-site residues include arginine 19 and asparagine 37.

Belongs to the acylphosphatase family.

The enzyme catalyses an acyl phosphate + H2O = a carboxylate + phosphate + H(+). This chain is Acylphosphatase (acyP), found in Colwellia psychrerythraea (strain 34H / ATCC BAA-681) (Vibrio psychroerythus).